The primary structure comprises 134 residues: Beta-synuclein (134 aa).

2 repeat units span residues Glu20–Ala30 and Glu31–Gly41. Positions Glu20 to Gly67 are 4 X 11 AA tandem repeats of [EGS]-K-T-K-[EQ]-[GQ]-V-X(4). The 3; approximate repeat unit spans residues Ser42–Ala56. The stretch at Glu57–Gly67 is repeat 4. The disordered stretch occupies residues Glu97–Ala134. The span at Val98–Ala134 shows a compositional bias: acidic residues. Ser118 carries the post-translational modification Phosphoserine; by BARK1, CK2 and GRK5.

This sequence belongs to the synuclein family. In terms of processing, phosphorylated. Phosphorylation by G-protein coupled receptor kinases (GRK) is more efficient than phosphorylation by CK1, CK2 and CaM-kinase II. In terms of tissue distribution, specifically present in synapses around neurons but not in glial cells.

The protein resides in the cytoplasm. May be involved in neuronal plasticity. In Bos taurus (Bovine), this protein is Beta-synuclein (SNCB).